A 199-amino-acid polypeptide reads, in one-letter code: Recombination protein RecR (199 aa).

The segment at 57 to 72 (CQACRTFTEETLCPIC) adopts a C4-type zinc-finger fold. The Toprim domain occupies 81 to 176 (EVICVVETPA…SVSRIAHGVP (96 aa)).

It belongs to the RecR family.

Functionally, may play a role in DNA repair. It seems to be involved in an RecBC-independent recombinational process of DNA repair. It may act with RecF and RecO. The protein is Recombination protein RecR of Shewanella woodyi (strain ATCC 51908 / MS32).